The primary structure comprises 292 residues: Elongation factor Ts (292 aa).

An involved in Mg(2+) ion dislocation from EF-Tu region spans residues 80 to 83 (TDFV).

Belongs to the EF-Ts family.

The protein localises to the cytoplasm. Its function is as follows. Associates with the EF-Tu.GDP complex and induces the exchange of GDP to GTP. It remains bound to the aminoacyl-tRNA.EF-Tu.GTP complex up to the GTP hydrolysis stage on the ribosome. The chain is Elongation factor Ts from Cupriavidus metallidurans (strain ATCC 43123 / DSM 2839 / NBRC 102507 / CH34) (Ralstonia metallidurans).